The chain runs to 136 residues: Peptide deformylase (136 aa).

Cys85 and His126 together coordinate Fe cation. Residue Glu127 is part of the active site. Position 130 (His130) interacts with Fe cation.

The protein belongs to the polypeptide deformylase family. Fe(2+) is required as a cofactor.

The enzyme catalyses N-terminal N-formyl-L-methionyl-[peptide] + H2O = N-terminal L-methionyl-[peptide] + formate. Functionally, removes the formyl group from the N-terminal Met of newly synthesized proteins. Requires at least a dipeptide for an efficient rate of reaction. N-terminal L-methionine is a prerequisite for activity but the enzyme has broad specificity at other positions. This chain is Peptide deformylase, found in Clostridium beijerinckii (strain ATCC 51743 / NCIMB 8052) (Clostridium acetobutylicum).